The chain runs to 313 residues: Short-chain dehydrogenase/reductase family 9C member 7 (313 aa).

29–53 (FITGCDSGFGNLLAKQLVDRGMQVL) serves as a coordination point for NADP(+). S160 serves as a coordination point for substrate. Y172 serves as the catalytic Proton acceptor. S185 is subject to Phosphoserine.

The protein belongs to the short-chain dehydrogenases/reductases (SDR) family. As to expression, expressed in the skin. Expressed in granular and cornified layers of the epidermis (at protein level). Highly expressed in liver.

The protein localises to the cytoplasm. It carries out the reaction a N-[omega-(9R,10R)-epoxy-(13R)-hydroxy-(11E)-octadecenoyloxy]acyl-beta-D-glucosyl-(1&lt;-&gt;1)-sphing-4E-enine + NAD(+) = a N-[omega-(9R,10R)-epoxy-13-oxo-(11E)-octadecenoyloxy]acyl-beta-D-glucosyl-(1&lt;-&gt;1)-sphing-4E-enine + NADH + H(+). The enzyme catalyses a N-[omega-(9R,10R)-epoxy-(13R)-hydroxy-(11E)-octadecenoyloxy]-acylsphing-4E-enine + NAD(+) = a N-[omega-(9R,10R)-epoxy-13-oxo-(11E)-octadecenoyloxy]-acylsphing-4E-enine + NADH + H(+). Functionally, plays a crucial role in the formation of the epidermal permeability barrier. Catalyzes the NAD+-dependent dehydrogenation of the linoleate 9,10-trans-epoxy-11E-13-alcohol esterified in omega-O-acylceramides (such as in N-[omega-(9R,10R)-epoxy-(13R)-hydroxy-(11E)-octadecenoyloxy]-acylsphing-4E-enine) to the corresponding 13-ketone, the reactive moiety required for binding of epidermal ceramides to proteins. Displays weak conversion of all-trans-retinal to all-trans-retinol in the presence of NADH. Has apparently no steroid dehydrogenase activity. This chain is Short-chain dehydrogenase/reductase family 9C member 7 (SDR9C7), found in Homo sapiens (Human).